Consider the following 116-residue polypeptide: Large ribosomal subunit protein bL17 (116 aa).

This sequence belongs to the bacterial ribosomal protein bL17 family. As to quaternary structure, part of the 50S ribosomal subunit. Contacts protein L32.

The chain is Large ribosomal subunit protein bL17 from Synechococcus sp. (strain RCC307).